The sequence spans 1527 residues: Rho guanine nucleotide exchange factor 11 (1527 aa).

The tract at residues 1 to 56 (MSIRLPHSIDRSASKKQSHLSSPIASWLSSLSSLGDSTPERTSPSHHRQPSDTSET) is disordered. Phosphoserine is present on residues Ser2, Ser30, Ser32, and Ser51. Positions 19 to 37 (HLSSPIASWLSSLSSLGDS) are enriched in low complexity. The PDZ domain occupies 64-143 (CVIIQKDQHG…LTLLGSSPPS (80 aa)). The tract at residues 216–247 (PCGETSQRTCEGRLSVDSQEADSGLDSGTERF) is disordered. Ser262 and Ser268 each carry phosphoserine. The residue at position 271 (Thr271) is a Phosphothreonine. Phosphoserine occurs at positions 272 and 288. The RGSL domain maps to 323–503 (ESDIIFQDLE…NTFMSHAGIR (181 aa)). Residues 461–487 (LRERQMAEKQLAALGDILSKYEEDRSA) adopt a coiled-coil conformation. Disordered stretches follow at residues 506–569 (ESRS…QSIK) and 582–687 (NSHQ…GRRS). Residues 509 to 519 (SSCTAEKTQSA) are compositionally biased toward polar residues. Basic and acidic residues-rich tracts occupy residues 539–551 (SKKEKDALEDKKR) and 624–645 (KGREEMKRSRKAENVPRPRSDV). Phosphoserine is present on residues Ser643 and Ser671. The segment covering 656–672 (LHQSASSSASSLSTRSL) has biased composition (low complexity). Phosphothreonine is present on residues Thr676 and Thr680. In terms of domain architecture, DH spans 742–931 (DRQEVINELF…REILKFVNEA (190 aa)). In terms of domain architecture, PH spans 973–1087 (KMIHEGPLTW…WMELLEEAVQ (115 aa)). Disordered stretches follow at residues 1090–1184 (TKHP…NRGI), 1231–1321 (QAAG…TEPA), and 1379–1411 (AGPLDSSTEPTGTPPSPSQCHSLPAWPTEPQPY). Positions 1126–1138 (EVYHTEKEPKKLP) are enriched in basic and acidic residues. A compositionally biased stretch (polar residues) spans 1242 to 1251 (PTPSVVSITS). Phosphoserine occurs at positions 1299 and 1304. The span at 1312–1321 (AAEAASTEPA) shows a compositional bias: low complexity. Residues Ser1462 and Ser1463 each carry the phosphoserine modification. A phosphothreonine mark is found at Thr1467 and Thr1480. The disordered stretch occupies residues 1480–1527 (TDYSLSPPAKEALASDSQNGQEQGSCPEEGSDIALEDSATDTAVSPGP). The residue at position 1485 (Ser1485) is a Phosphoserine. Over residues 1494–1503 (SDSQNGQEQG) the composition is skewed to polar residues. Positions 1508–1518 (EGSDIALEDSA) are enriched in acidic residues.

As to quaternary structure, interacts with RHOA, GNA13 and SLC1A6. Interacts with GNA12, PLXNB1 and PLXNB2. Interacts (via DH domain) with GCSAM (via C-terminus). Found in a complex with ARHGEF11 and ARHGEF12; binding to ARHGEF11 and ARHGEF12 enhances CDC42 GEF activity of PLEKHG4B, and PLEKHG4B, in turn, inhibits ARHGEF11- and ARHGEF12-mediated RHOA activation. Phosphorylated by MAP kinase p38 (MAPK11, MAPK12, MAPK13 and/or MAPK14). Post-translationally, ubiquitinated by the BCR(KLHL20) E3 ubiquitin ligase complex when previously phosphorylated by MAP kinase p38 (MAPK11, MAPK12, MAPK13 and/or MAPK14), leading to its degradation, thereby restricting RhoA activity and facilitating growth cone spreading and neurite outgrowth.

It is found in the cytoplasm. The protein resides in the membrane. Functionally, may play a role in the regulation of RhoA GTPase by guanine nucleotide-binding alpha-12 (GNA12) and alpha-13 (GNA13). Acts as guanine nucleotide exchange factor (GEF) for RhoA GTPase and may act as GTPase-activating protein (GAP) for GNA12 and GNA13. Involved in neurotrophin-induced neurite outgrowth. In Rattus norvegicus (Rat), this protein is Rho guanine nucleotide exchange factor 11 (Arhgef11).